A 525-amino-acid polypeptide reads, in one-letter code: GMP synthase [glutamine-hydrolyzing] (525 aa).

The Glutamine amidotransferase type-1 domain maps to 9-207 (RILILDFGSQ…VRDICQCEAL (199 aa)). Catalysis depends on Cys-86, which acts as the Nucleophile. Active-site residues include His-181 and Glu-183. Residues 208 to 400 (WTPAKIIDDA…LGLPYDMLYR (193 aa)) enclose the GMPS ATP-PPase domain. An ATP-binding site is contributed by 235 to 241 (SGGVDSS).

Homodimer.

The catalysed reaction is XMP + L-glutamine + ATP + H2O = GMP + L-glutamate + AMP + diphosphate + 2 H(+). Its pathway is purine metabolism; GMP biosynthesis; GMP from XMP (L-Gln route): step 1/1. Catalyzes the synthesis of GMP from XMP. The protein is GMP synthase [glutamine-hydrolyzing] of Salmonella paratyphi B (strain ATCC BAA-1250 / SPB7).